A 646-amino-acid polypeptide reads, in one-letter code: Aquaglycerol porin AQY3 (646 aa).

A compositionally biased stretch (low complexity) spans 1 to 14 (MSYESGRSSSSSES). 2 disordered regions span residues 1 to 68 (MSYE…SRNK) and 175 to 262 (KNMD…KKRT). The Cytoplasmic portion of the chain corresponds to 1–350 (MSYESGRSSS…AKIRYHMREP (350 aa)). Basic and acidic residues predominate over residues 19 to 41 (TLKEEPNGKIAWEESVKKSRENN). A compositionally biased stretch (polar residues) spans 190-201 (TDISRGGSTTSV). A helical transmembrane segment spans residues 351-371 (FAEFLGTLVLVIFGVGGNLQA). The Extracellular segment spans residues 372–383 (TVTKGSGGSYES). A helical membrane pass occupies residues 384 to 404 (LSFAWGFGCMLGVYVAGGISG). The Cytoplasmic portion of the chain corresponds to 405–427 (GHINPAVTISMAIFRKFPWKKVP). The short motif at 408-410 (NPA) is the NPA 1 element. Residues 428 to 448 (VYIVAQIIGAYFGGAMAYGYF) form a helical membrane-spanning segment. Over 449 to 481 (WSSITEFEGGPHIRTTATGACLFTDPKSYVTWR) the chain is Extracellular. Residues 482–502 (NAFFDEFIGASILVGCLMALL) form a helical membrane-spanning segment. Residues 503–509 (DDSNAPP) are Cytoplasmic-facing. Residues 510–530 (GNGMTALIIGFLVAAIGMALG) form a helical membrane-spanning segment. Residues 531 to 569 (YQTSFTINPARDLGPRIFASMIGYGPHAFHLTHWWWTWG) are Extracellular-facing. Residues 538–540 (NPA) carry the NPA 2 motif. Residues 570–590 (AWGGPIAGGIAGALIYDIFIF) form a helical membrane-spanning segment. Over 591–646 (TGCESPVNYPDNGYIENRVGKLLHAEFHQNDGTVSDESGVNSNSNTGSKKSVPTSS) the chain is Cytoplasmic. Positions 621–646 (DGTVSDESGVNSNSNTGSKKSVPTSS) are disordered.

This sequence belongs to the MIP/aquaporin (TC 1.A.8) family.

The protein resides in the cell membrane. The enzyme catalyses glycerol(in) = glycerol(out). Functionally, channel protein that mediates glycerol entry under ethanol stimulation. Does not seem to mediate glycerol uptake under standard conditions. This Saccharomyces cerevisiae (strain ATCC 204508 / S288c) (Baker's yeast) protein is Aquaglycerol porin AQY3.